A 296-amino-acid chain; its full sequence is Nucleotide-binding protein MGAS2096_Spy0550 (296 aa).

An ATP-binding site is contributed by 13 to 20 (GMSGAGKT). 63 to 66 (DMRS) serves as a coordination point for GTP.

It belongs to the RapZ-like family.

Displays ATPase and GTPase activities. This is Nucleotide-binding protein MGAS2096_Spy0550 from Streptococcus pyogenes serotype M12 (strain MGAS2096).